We begin with the raw amino-acid sequence, 380 residues long: Cytochrome b (380 aa).

Helical transmembrane passes span 33–53 (FGSL…FLAM), 77–98 (WLIR…YLHV), 113–133 (WNIG…GYVL), and 178–198 (FFAF…IHLL). The heme b site is built by His83 and His97. 2 residues coordinate heme b: His182 and His196. His201 contributes to the a ubiquinone binding site. A run of 4 helical transmembrane segments spans residues 226–246 (YKDM…TLFT), 288–308 (LGGV…PILH), 320–340 (ITQM…WIGG), and 347–367 (FMTI…ILIP).

Belongs to the cytochrome b family. In terms of assembly, the cytochrome bc1 complex contains 3 respiratory subunits (MT-CYB, CYC1 and UQCRFS1), 2 core proteins (UQCRC1 and UQCRC2) and probably 6 low-molecular weight proteins. Requires heme b as cofactor.

The protein resides in the mitochondrion inner membrane. Its function is as follows. Component of the ubiquinol-cytochrome c reductase complex (complex III or cytochrome b-c1 complex) that is part of the mitochondrial respiratory chain. The b-c1 complex mediates electron transfer from ubiquinol to cytochrome c. Contributes to the generation of a proton gradient across the mitochondrial membrane that is then used for ATP synthesis. This is Cytochrome b (mt-cyb) from Latimeria chalumnae (Coelacanth).